A 367-amino-acid polypeptide reads, in one-letter code: UDP-N-acetylglucosamine--N-acetylmuramyl-(pentapeptide) pyrophosphoryl-undecaprenol N-acetylglucosamine transferase (367 aa).

UDP-N-acetyl-alpha-D-glucosamine contacts are provided by residues 15 to 17 (TGG), Asn-127, Arg-163, Ser-191, Ile-249, and Gln-294.

It belongs to the glycosyltransferase 28 family. MurG subfamily.

Its subcellular location is the cell inner membrane. It carries out the reaction di-trans,octa-cis-undecaprenyl diphospho-N-acetyl-alpha-D-muramoyl-L-alanyl-D-glutamyl-meso-2,6-diaminopimeloyl-D-alanyl-D-alanine + UDP-N-acetyl-alpha-D-glucosamine = di-trans,octa-cis-undecaprenyl diphospho-[N-acetyl-alpha-D-glucosaminyl-(1-&gt;4)]-N-acetyl-alpha-D-muramoyl-L-alanyl-D-glutamyl-meso-2,6-diaminopimeloyl-D-alanyl-D-alanine + UDP + H(+). The protein operates within cell wall biogenesis; peptidoglycan biosynthesis. Its function is as follows. Cell wall formation. Catalyzes the transfer of a GlcNAc subunit on undecaprenyl-pyrophosphoryl-MurNAc-pentapeptide (lipid intermediate I) to form undecaprenyl-pyrophosphoryl-MurNAc-(pentapeptide)GlcNAc (lipid intermediate II). This is UDP-N-acetylglucosamine--N-acetylmuramyl-(pentapeptide) pyrophosphoryl-undecaprenol N-acetylglucosamine transferase from Burkholderia pseudomallei (strain 1710b).